The sequence spans 192 residues: Ion-translocating oxidoreductase complex subunit A (192 aa).

Transmembrane regions (helical) follow at residues 5-25, 39-59, 65-85, 102-122, 134-154, and 171-191; these read LLLLIGTVLVNNFVLVKFLGL, IGMSMATTFVLTLASILSYLV, LPFDLGYLRTMSFILVIAVVV, ALGIYLPLITTNCAVLGVALL, AIFGFGAAVGFSLVLILFSAM, and AIAMVTAGLMSLAFMGFTGLV.

It belongs to the NqrDE/RnfAE family. In terms of assembly, the complex is composed of six subunits: RnfA, RnfB, RnfC, RnfD, RnfE and RnfG.

The protein resides in the cell inner membrane. Functionally, part of a membrane-bound complex that couples electron transfer with translocation of ions across the membrane. The polypeptide is Ion-translocating oxidoreductase complex subunit A (Shewanella pealeana (strain ATCC 700345 / ANG-SQ1)).